Here is a 580-residue protein sequence, read N- to C-terminus: Arginine--tRNA ligase (580 aa).

Residues 137–147 (ANPTGPLHIGH) carry the 'HIGH' region motif.

This sequence belongs to the class-I aminoacyl-tRNA synthetase family. In terms of assembly, monomer.

It is found in the cytoplasm. It catalyses the reaction tRNA(Arg) + L-arginine + ATP = L-arginyl-tRNA(Arg) + AMP + diphosphate. In Anaplasma phagocytophilum (strain HZ), this protein is Arginine--tRNA ligase.